The primary structure comprises 121 residues: Large ribosomal subunit protein bL12 (121 aa).

This sequence belongs to the bacterial ribosomal protein bL12 family. Homodimer. Part of the ribosomal stalk of the 50S ribosomal subunit. Forms a multimeric L10(L12)X complex, where L10 forms an elongated spine to which 2 to 4 L12 dimers bind in a sequential fashion. Binds GTP-bound translation factors.

Functionally, forms part of the ribosomal stalk which helps the ribosome interact with GTP-bound translation factors. Is thus essential for accurate translation. The protein is Large ribosomal subunit protein bL12 of Salmonella agona (strain SL483).